We begin with the raw amino-acid sequence, 633 residues long: NBPF family member NBPF3 (633 aa).

Residues 15 to 52 (RGPDVETSPFGAPRAASHGVGRHQELRDPTVPGPTSSA) are disordered. The stretch at 127-186 (LRDERLLTEEKLAEELGQAEELRQYKVLVHSQERELTQLREKLQEGRDASRSLNQHLQAL) forms a coiled coil. Olduvai domains are found at residues 221–313 (ENDD…CIIP), 314–402 (ENES…ATSP), 405–460 (SREL…LDLD), 461–552 (RMKK…PPCP), and 555–633 (NEVL…IFPH). The segment covering 316–326 (ESDHEQEEEKG) has biased composition (basic and acidic residues). Positions 316–370 (ESDHEQEEEKGPVSPRNLQESEEEEAPQESWDEGDWTLSIPPDMSASYQSDRSTF) are disordered. A compositionally biased stretch (acidic residues) spans 335-350 (ESEEEEAPQESWDEGD). The disordered stretch occupies residues 463-484 (KKDQEEEEDQGPPCPRLSRELP).

This sequence belongs to the NBPF family. Expressed in testis and fetal heart, as well as in non small cell lung carcinoma and neuroblastoma cell line.

It is found in the cytoplasm. This chain is NBPF family member NBPF3, found in Homo sapiens (Human).